The chain runs to 228 residues: L-ribulose-5-phosphate 4-epimerase UlaF (228 aa).

Residues 26–27, 43–44, and 72–73 contribute to the substrate site; these read GN, SG, and SS. Positions 74, 93, and 95 each coordinate Zn(2+). Residue D118 is the Proton donor/acceptor of the active site. Residue H167 participates in Zn(2+) binding. The active-site Proton donor/acceptor is Y225.

The protein belongs to the aldolase class II family. AraD/FucA subfamily. It depends on Zn(2+) as a cofactor.

The enzyme catalyses L-ribulose 5-phosphate = D-xylulose 5-phosphate. It participates in cofactor degradation; L-ascorbate degradation; D-xylulose 5-phosphate from L-ascorbate: step 4/4. Catalyzes the isomerization of L-ribulose 5-phosphate to D-xylulose 5-phosphate. Is involved in the anaerobic L-ascorbate utilization. This is L-ribulose-5-phosphate 4-epimerase UlaF from Escherichia coli O17:K52:H18 (strain UMN026 / ExPEC).